The sequence spans 62 residues: Large ribosomal subunit protein bL28 (62 aa).

The disordered stretch occupies residues 1–27 (MARECYITGRKARSGNKRSHAMNKSKR). Residues 10–27 (RKARSGNKRSHAMNKSKR) are compositionally biased toward basic residues.

It belongs to the bacterial ribosomal protein bL28 family.

This Shouchella clausii (strain KSM-K16) (Alkalihalobacillus clausii) protein is Large ribosomal subunit protein bL28.